The primary structure comprises 603 residues: Sulfite reductase [NADPH] flavoprotein alpha-component (603 aa).

In terms of domain architecture, Flavodoxin-like spans 64–202 (ITLISASQTG…QAETWRAAIV (139 aa)). Residues 70–75 (SQTGNA), 117–120 (STQG), and 153–162 (LGDSSYEHFA) contribute to the FMN site. Residues 236-452 (EAPLTAHLAL…IEHNDNFRLP (217 aa)) enclose the FAD-binding FR-type domain. FAD-binding positions include threonine 326, leucine 360, 390 to 393 (RLYS), 408 to 410 (TVG), tyrosine 414, and 423 to 426 (GGAS). NADP(+)-binding positions include 523-524 (SR), 529-533 (KIYVQ), and aspartate 565. FAD is bound at residue tyrosine 603.

It belongs to the NADPH-dependent sulphite reductase flavoprotein subunit CysJ family. In the N-terminal section; belongs to the flavodoxin family. The protein in the C-terminal section; belongs to the flavoprotein pyridine nucleotide cytochrome reductase family. As to quaternary structure, alpha(8)-beta(8). The alpha component is a flavoprotein, the beta component is a hemoprotein. It depends on FAD as a cofactor. The cofactor is FMN.

The catalysed reaction is hydrogen sulfide + 3 NADP(+) + 3 H2O = sulfite + 3 NADPH + 4 H(+). The protein operates within sulfur metabolism; hydrogen sulfide biosynthesis; hydrogen sulfide from sulfite (NADPH route): step 1/1. Its function is as follows. Component of the sulfite reductase complex that catalyzes the 6-electron reduction of sulfite to sulfide. This is one of several activities required for the biosynthesis of L-cysteine from sulfate. The flavoprotein component catalyzes the electron flow from NADPH -&gt; FAD -&gt; FMN to the hemoprotein component. The polypeptide is Sulfite reductase [NADPH] flavoprotein alpha-component (Sodalis glossinidius (strain morsitans)).